We begin with the raw amino-acid sequence, 590 residues long: Arginine--tRNA ligase (590 aa).

The short motif at 132–142 is the 'HIGH' region element; that stretch reads PNTNKPLHLGH.

This sequence belongs to the class-I aminoacyl-tRNA synthetase family. In terms of assembly, monomer.

The protein resides in the cytoplasm. It catalyses the reaction tRNA(Arg) + L-arginine + ATP = L-arginyl-tRNA(Arg) + AMP + diphosphate. The chain is Arginine--tRNA ligase from Treponema denticola (strain ATCC 35405 / DSM 14222 / CIP 103919 / JCM 8153 / KCTC 15104).